Here is a 347-residue protein sequence, read N- to C-terminus: MQDLVIRRPDDWHLHLRDGGMLRGVIADTSRHFARAIIMPNLVPPVVTSADAAAYRERILAAIPAGDRFEPLMTLYLTEGTDPGDVEAGFRSGLVKAVKLYPAGATTNSSSGVRDIDKAMPVLERMAEIGLPLCVHGEVTTAEVDIFDREAVFIETVLDPLRRRLPDLRITMEHVTTKDGVDYIREHAANLAGSITTHHLIINRNAILVGGIKPHYYCLPVAKREAHRLALRQAAISGDVRFFLGTDSAPHVDPLKECACGCAGIYTSINTLSCLAHVFEEEGALDRLEAFTSLNGPAWYGLPANEETITLRKQEEPVSYPARIETEAGPVTVFDPMFPLHWAVTQA.

Zn(2+) is bound by residues His13 and His15. Residues 15–17 (HLR) and Asn41 each bind substrate. Residues Lys99, His136, and His174 each coordinate Zn(2+). N6-carboxylysine is present on Lys99. His136 serves as a coordination point for substrate. Residue Leu219 participates in substrate binding. Asp247 is a binding site for Zn(2+). Asp247 is an active-site residue. 2 residues coordinate substrate: His251 and Ala263.

It belongs to the metallo-dependent hydrolases superfamily. DHOase family. Class II DHOase subfamily. As to quaternary structure, homodimer. Zn(2+) is required as a cofactor.

It carries out the reaction (S)-dihydroorotate + H2O = N-carbamoyl-L-aspartate + H(+). The protein operates within pyrimidine metabolism; UMP biosynthesis via de novo pathway; (S)-dihydroorotate from bicarbonate: step 3/3. In terms of biological role, catalyzes the reversible cyclization of carbamoyl aspartate to dihydroorotate. This is Dihydroorotase from Rhizobium meliloti (strain 1021) (Ensifer meliloti).